A 230-amino-acid chain; its full sequence is Orotidine 5'-phosphate decarboxylase (230 aa).

Substrate-binding positions include Asp10, Lys31, 58 to 67 (DLKLHDIPNT), Thr117, Arg179, Gln188, Gly208, and Arg209. Lys60 serves as the catalytic Proton donor.

The protein belongs to the OMP decarboxylase family. Type 1 subfamily. In terms of assembly, homodimer.

It carries out the reaction orotidine 5'-phosphate + H(+) = UMP + CO2. It participates in pyrimidine metabolism; UMP biosynthesis via de novo pathway; UMP from orotate: step 2/2. Its function is as follows. Catalyzes the decarboxylation of orotidine 5'-monophosphate (OMP) to uridine 5'-monophosphate (UMP). In Staphylococcus aureus (strain Mu3 / ATCC 700698), this protein is Orotidine 5'-phosphate decarboxylase.